We begin with the raw amino-acid sequence, 138 residues long: Cell division protein SepF (138 aa).

Positions 1–59 (MNNKFKDFFGFGDNDSYEERDAYEEHYDEQEEMQNSNRPTNSRDSNVVSIKAGQAGSGP) are disordered. Residues 33–48 (MQNSNRPTNSRDSNVV) show a composition bias toward polar residues.

It belongs to the SepF family. In terms of assembly, homodimer. Interacts with FtsZ.

Its subcellular location is the cytoplasm. Functionally, cell division protein that is part of the divisome complex and is recruited early to the Z-ring. Probably stimulates Z-ring formation, perhaps through the cross-linking of FtsZ protofilaments. Its function overlaps with FtsA. The sequence is that of Cell division protein SepF from Lactobacillus delbrueckii subsp. bulgaricus (strain ATCC 11842 / DSM 20081 / BCRC 10696 / JCM 1002 / NBRC 13953 / NCIMB 11778 / NCTC 12712 / WDCM 00102 / Lb 14).